Here is a 985-residue protein sequence, read N- to C-terminus: Ephrin type-A receptor 4-B (985 aa).

The N-terminal stretch at 1–20 (MAGIVHGILFCGLFGLCWAV) is a signal peptide. Residues 21 to 547 (TGSRIYPASE…MIGEGTSPTV (527 aa)) are Extracellular-facing. The Eph LBD domain occupies 30 to 209 (EVTLLDSRSV…FYKKCPLTVR (180 aa)). Fibronectin type-III domains lie at 328 to 438 (PPSA…TNQA) and 439 to 536 (APST…TVPS). N340 and N407 each carry an N-linked (GlcNAc...) asparagine glycan. The chain crosses the membrane as a helical span at residues 548–569 (LLVSVAGSIVLVVILIAAFVIS). At 570-985 (RRRSKYSKAK…QQMQGRMVPV (416 aa)) the chain is on the cytoplasmic side. Phosphotyrosine; by autocatalysis is present on residues Y595 and Y601. One can recognise a Protein kinase domain in the interval 620–881 (IKIEKVIGVG…QIVSMLDKLI (262 aa)). ATP-binding positions include 626–634 (IGVGEFGEV) and K652. Catalysis depends on D745, which acts as the Proton acceptor. 2 positions are modified to phosphotyrosine; by autocatalysis: Y778 and Y927. In terms of domain architecture, SAM spans 910–974 (SQVASVLDWL…LSSVQGMRTQ (65 aa)). The PDZ-binding signature appears at 983–985 (VPV).

This sequence belongs to the protein kinase superfamily. Tyr protein kinase family. Ephrin receptor subfamily. As to expression, localized expression in a subset of neural crest and neural tissues in embryos.

The protein resides in the cell membrane. Its subcellular location is the early endosome. The catalysed reaction is L-tyrosyl-[protein] + ATP = O-phospho-L-tyrosyl-[protein] + ADP + H(+). In terms of biological role, receptor tyrosine kinase which binds membrane-bound ephrin family ligands residing on adjacent cells, leading to contact-dependent bidirectional signaling into neighboring cells. The signaling pathway downstream of the receptor is referred to as forward signaling while the signaling pathway downstream of the ephrin ligand is referred to as reverse signaling. Highly promiscuous, it has the unique property among Eph receptors to bind and to be physiologically activated by both GPI-anchored ephrin-A and transmembrane ephrin-B ligands including EFNA1 and EFNB3. Upon activation by ephrin ligands, modulates cell morphology and integrin-dependent cell adhesion through regulation of the Rac, Rap and Rho GTPases activity. Plays an important role in the development of the nervous system controlling different steps of axonal guidance including the establishment of the corticospinal projections. This chain is Ephrin type-A receptor 4-B (epha4-b), found in Xenopus laevis (African clawed frog).